The sequence spans 428 residues: Immunoglobulin superfamily member 11 (428 aa).

An N-terminal signal peptide occupies residues 1 to 22 (MTRRRSAPASWLLVSLLGVATS). The Ig-like V-type domain occupies 23–136 (LEVSESPGSV…DRGGRNIGVT (114 aa)). Over 23–240 (LEVSESPGSV…QVISPQPRSV (218 aa)) the chain is Extracellular. Disulfide bonds link Cys-44–Cys-120 and Cys-165–Cys-215. An N-linked (GlcNAc...) asparagine glycan is attached at Asn-102. One can recognise an Ig-like C2-type domain in the interval 144–234 (PSAPQCQIQG…TCLLDLQVIS (91 aa)). The helical transmembrane segment at 241–261 (GVIAGAVGTGAVLIVICLALI) threads the bilayer. The Cytoplasmic portion of the chain corresponds to 262 to 428 (SGAFFYWRSK…PAQSRAGSLV (167 aa)). Arg-375 carries the omega-N-methylarginine modification. Positions 376 to 389 (GSSPQVLPRNNGSV) are enriched in polar residues. The tract at residues 376 to 396 (GSSPQVLPRNNGSVSRKPWPQ) is disordered.

Post-translationally, N-glycosylated. Highly expressed in testis and detected in kidney and adrenal gland. In brain, expressed in commissure fibers of the corpus callosum and pyramidal cell layers of the dentate gyrus and hippocampus where it is probably expressed by both neurons and glial cells.

The protein resides in the cell membrane. Functionally, functions as a cell adhesion molecule through homophilic interaction. Stimulates cell growth. This is Immunoglobulin superfamily member 11 (Igsf11) from Mus musculus (Mouse).